The chain runs to 505 residues: Glycerol kinase (505 aa).

Residue Thr17 participates in ADP binding. Thr17, Thr18, and Ser19 together coordinate ATP. Residue Thr17 participates in sn-glycerol 3-phosphate binding. ADP is bound at residue Arg21. 4 residues coordinate sn-glycerol 3-phosphate: Arg87, Glu88, Tyr139, and Asp250. Arg87, Glu88, Tyr139, Asp250, and Gln251 together coordinate glycerol. 2 residues coordinate ADP: Thr272 and Gly315. The ATP site is built by Thr272, Gly315, Gln319, and Gly416. Residues Gly416 and Asn420 each coordinate ADP.

It belongs to the FGGY kinase family.

It catalyses the reaction glycerol + ATP = sn-glycerol 3-phosphate + ADP + H(+). The protein operates within polyol metabolism; glycerol degradation via glycerol kinase pathway; sn-glycerol 3-phosphate from glycerol: step 1/1. Its activity is regulated as follows. Inhibited by fructose 1,6-bisphosphate (FBP). Key enzyme in the regulation of glycerol uptake and metabolism. Catalyzes the phosphorylation of glycerol to yield sn-glycerol 3-phosphate. This is Glycerol kinase from Azotobacter vinelandii (strain DJ / ATCC BAA-1303).